The primary structure comprises 337 residues: MKKFIFFFKNYCYISGSMLLFSLIDLLLWIISLYCVGLVFWILFVLQCIYFVWWLWKNIFYQLNSFGLVNFVWDNPLSVIIGKLGTGKTLLLTYLSQTMKLLTDEIYSNYPLEDDKVKVLTFKNLDFTDRTKPVPPDDSVILFDESYLYIDGTSPHDEKKVHSGKIPWIVLARHFGNRALFTAQREGMIWNNIRQLASGIIIPISLKKPVIKKGFNFFNRFFIMQIGIFQDITDYEIWKTKSVERTAEGKRVKHKSDVGLGIRFFKIIIPLEFANKYDSQWLKFVRDLKNDEIVNKKEYYWSEITKLSVKERLELFDIDILKKNLKPKKEKGNGKDD.

A run of 2 helical transmembrane segments spans residues 4-24 (FIFF…FSLI) and 26-46 (LLLW…LFVL).

The protein belongs to the plectrovirus ORF2 family.

The protein localises to the host membrane. This is an uncharacterized protein from Spiroplasma virus SpV1-R8A2 B (SpV1).